A 1171-amino-acid chain; its full sequence is Protein WWC2 (1171 aa).

WW domains are found at residues 9–42 and 56–89; these read LPLPDGWEEARDYDGKVFYIDHNSRQTSWIDPRD and NELPWGWESSYDPQIGVYFINHINQTTQIEDPRK. Coiled-coil stretches lie at residues 120 to 193, 223 to 257, and 301 to 420; these read KEQR…YKEQ, ELKSIRKAISTGEKEKQDLMQSLVKLKERFHLEEA, and LAEK…KSAT. Disordered stretches follow at residues 521 to 552 and 603 to 637; these read SPTAQQDTQDAKPPKSVTSLSSLSSLSSLSPP and QALAERKSTGEGLRHQSSASQEGRTDIEFPRKNPD. The segment covering 534 to 551 has biased composition (low complexity); it reads PKSVTSLSSLSSLSSLSP. Composition is skewed to basic and acidic residues over residues 606–616 and 625–637; these read AERKSTGEGLR and GRTDIEFPRKNPD. In terms of domain architecture, C2 spans 684–806; sequence GAAQAQLILR…FSNDVHTQWY (123 aa). 2 coiled-coil regions span residues 836–870 and 1047–1123; these read LDLDAVSALLERTSAELEAVEQELAQEDDDQEQLC and DLEL…NAEK.

This sequence belongs to the WWC family.

It localises to the cytoplasm. Its subcellular location is the cytosol. Functionally, negative regulator of the Hippo signaling pathway, also known as the Salvador-Warts-Hippo (SWH) pathway. This chain is Protein WWC2 (wwc2), found in Xenopus tropicalis (Western clawed frog).